A 158-amino-acid chain; its full sequence is Protein EOLA1 (158 aa).

The 87-residue stretch at 6–92 folds into the ASCH domain; the sequence is LSFRQPYAGF…IAGLVDIGET (87 aa).

Belongs to the EOLA family. Interacts with MT2A. As to expression, expressed primarily in heart, skeletal muscle, kidney, liver and placenta. Relatively high level of expression in spleen, colon and small intestine. Almost no expression in brain, thymus, lung and peripheral blood leukocytes. Expressed in epithelial cells (at protein level).

Its function is as follows. May play a role in cell protection during the inflammatory response. In epithelial cells, negatively regulates IL6 production and apoptosis through the regulation of MT2A expression. This is Protein EOLA1 from Homo sapiens (Human).